An 82-amino-acid chain; its full sequence is RNA-binding protein BPUM_0095 (82 aa).

The protein belongs to the eukaryotic ribosomal protein eL8 family.

The polypeptide is RNA-binding protein BPUM_0095 (Bacillus pumilus (strain SAFR-032)).